The primary structure comprises 212 residues: Thymidylate kinase (212 aa).

An ATP-binding site is contributed by 15–22; sequence GIDGAGKS.

It belongs to the thymidylate kinase family.

It catalyses the reaction dTMP + ATP = dTDP + ADP. Functionally, phosphorylation of dTMP to form dTDP in both de novo and salvage pathways of dTTP synthesis. The protein is Thymidylate kinase of Chromobacterium violaceum (strain ATCC 12472 / DSM 30191 / JCM 1249 / CCUG 213 / NBRC 12614 / NCIMB 9131 / NCTC 9757 / MK).